Consider the following 99-residue polypeptide: Large ribosomal subunit protein uL23 (99 aa).

Belongs to the universal ribosomal protein uL23 family. As to quaternary structure, part of the 50S ribosomal subunit. Contacts protein L29, and trigger factor when it is bound to the ribosome.

In terms of biological role, one of the early assembly proteins it binds 23S rRNA. One of the proteins that surrounds the polypeptide exit tunnel on the outside of the ribosome. Forms the main docking site for trigger factor binding to the ribosome. This is Large ribosomal subunit protein uL23 from Xanthomonas axonopodis pv. citri (strain 306).